A 600-amino-acid polypeptide reads, in one-letter code: Beta-hexosaminidase (600 aa).

The N-terminal stretch at 1–18 (MRISQICTVLSTVTSAVA) is a signal peptide. The propeptide occupies 19-96 (VGVNPLPAPR…PFPTPTAGAS (78 aa)). O-linked (Man...) threonine glycosylation occurs at threonine 78. O-linked (Man...) serine glycans are attached at residues serine 83 and serine 84. Catalysis depends on charge relay system residues aspartate 222 and histidine 275. Cysteine 290 and cysteine 351 form a disulfide bridge. Asparagine 318 is a glycosylation site (N-linked (HexNAc...) asparagine). Catalysis depends on glutamate 346, which acts as the Charge relay system. Asparagine 353 is a glycosylation site (N-linked (GlcNAc...) asparagine). N-linked (HexNAc...) asparagine glycosylation occurs at asparagine 387. Asparagine 428 is a glycosylation site (N-linked (GlcNAc...) asparagine). A disulfide bridge connects residues cysteine 448 and cysteine 483. N-linked (GlcNAc...) asparagine glycosylation is found at asparagine 500 and asparagine 525. Cysteine 583 and cysteine 590 are joined by a disulfide.

This sequence belongs to the glycosyl hydrolase 20 family. As to quaternary structure, homodimer. Oligosaccharide moieties may also take part in the dimerization. Dimerization is a pH-dependent reversible process. The individual catalytic cores dimerize and the catalytic core of one subunit in the active dimer interacts with the propeptide of the second subunit. The precursor of the propeptide is intracellularly processed in the endoplasmic reticulum by a dibasic peptidase, different from Kex2, removing Lys-97--Arg-101 from the precursor producing the activated propeptide. The propeptide binds non-covalently to the catalytic domain. Propeptide binding is necessary for full activation of the enzyme, dimerization of the catalytic domain and secretion of the active enzyme. Post-translationally, O-glycosylated. O-glycosylation (O-mannosylation) at the C-terminus of the propeptide is necessary for full enzyme activity. N-glycosylated. N-glycosylation of the catalytic domain increases the stability and solubility of the enzyme, especially at low pH. Contains high mannose-type (M4-M11) N-glycans at the C-terminus. N-glycan deglycosylation does not affect enzyme activity.

The protein localises to the secreted. It carries out the reaction Hydrolysis of terminal non-reducing N-acetyl-D-hexosamine residues in N-acetyl-beta-D-hexosaminides.. Activated by non-covalent binding of the propeptide to the catalytic domain. The concentration of the propeptide is regulated in the endoplasmic reticulum and the propeptide thus regulates the amount of the active enzyme at various stages of the growth cycle. The dimeric enzyme has about half of the maximal activity in the presence of one bound propeptide, but is fully active with two bound O-glycosylated propeptides. Inhibited by N-acetylglucosamine (NAG)-thiazoline. Functionally, selectively hydrolyzes GlcNAcbeta(1-&gt;4)GlcNAc (N,N'-diacetylchitobiose) and Gal-NAcbeta(1-&gt;4)GlcNAc, but not their C-2 epimers GlcNAcbeta(1-&gt;4)ManNAc or Gal-NAcbeta(1-&gt;4)ManNAc. However, hydrolyzes both GlcNAcbeta(1-&gt;6)GlcNAc and GlcNAcbeta(1-&gt;6)ManNAc. Part of the binary chitinolytic system. Involved in hydrolysis of chitobiose and higher chito-oligomers (produced from cell wall chitin by endochitinases), thus contributing to the formation of germ tubes, fruit-bodies and septa during hyphenation. Hydrolyzes synthetic substrate p-nitrophenyl-beta-N-acetyl-D-glucosaminide (pNP-GlcNAc). Hydrolyzes synthetic substrate p-nitrophenyl-beta-N-acetyl-D-galactosaminide (pNP-GalNAc). Hydrolyzes chromogenic substrate 4-nitrophenyl-2-acetamido-2-deoxyglucopyranoside. This chain is Beta-hexosaminidase, found in Aspergillus oryzae (Yellow koji mold).